A 126-amino-acid polypeptide reads, in one-letter code: Glycine cleavage system H protein (126 aa).

One can recognise a Lipoyl-binding domain in the interval 23–104 (TLTVGITDHA…PYDNWLFKIK (82 aa)). The residue at position 64 (K64) is an N6-lipoyllysine.

Belongs to the GcvH family. As to quaternary structure, the glycine cleavage system is composed of four proteins: P, T, L and H. (R)-lipoate is required as a cofactor.

In terms of biological role, the glycine cleavage system catalyzes the degradation of glycine. The H protein shuttles the methylamine group of glycine from the P protein to the T protein. This chain is Glycine cleavage system H protein, found in Paraburkholderia phymatum (strain DSM 17167 / CIP 108236 / LMG 21445 / STM815) (Burkholderia phymatum).